The sequence spans 350 residues: MNPRGLFQDFNPSKFLIYTCLLLFSVLLPLRLDGIIQWSYWAVFAPIWLWKLLVVAGASVGAGVWARNPRYRTEGEACVEFKAMLIAVGIHLLLLMFEVLVCDRVERGTHFWLLVFMPLFFVSPVSVAACVWGFRHDRSLELEILCSVNILQFIFIALKLDRIIHWPWLVVFVPLWILMSFLCLVVLYYIVWSLLFLRSLDVVAEQRRTHVTMAISWITIVVPLLTFEVLLVHRLDGHNTFSYVSIFVPLWLSLLTLMATTFRRKGGNHWWFGIRRDFCQFLLEIFPFLREYGNISYDLHHEDSEDAEETSVPEAPKIAPIFGKKARVVITQSPGKYVPPPPKLNIDMPD.

Helical transmembrane passes span 16–36, 41–61, 81–101, 111–131, 168–188, 211–231, and 240–260; these read LIYT…DGII, WAVF…ASVG, FKAM…EVLV, FWLL…AACV, WLVV…VVLY, VTMA…EVLL, and TFSY…LMAT.

The protein belongs to the TMEM185 family.

The protein localises to the membrane. This is Transmembrane protein 185B (TMEM185B) from Homo sapiens (Human).